A 789-amino-acid chain; its full sequence is Phenylalanine--tRNA ligase beta subunit (789 aa).

Positions 38-151 constitute a tRNA-binding domain; sequence KKHLQSFVVV…NTYNVGESFF (114 aa). In terms of domain architecture, B5 spans 398 to 474; sequence HNDILLNFSP…RLYGYDKILE (77 aa). Residues Asp452, Asp458, Glu461, and Glu462 each coordinate Mg(2+). Residues 694-787 form the FDX-ACB domain; that stretch reads LRYQSVKRDF…ISKGFNGILR (94 aa).

The protein belongs to the phenylalanyl-tRNA synthetase beta subunit family. Type 1 subfamily. In terms of assembly, tetramer of two alpha and two beta subunits. Mg(2+) serves as cofactor.

It localises to the cytoplasm. It carries out the reaction tRNA(Phe) + L-phenylalanine + ATP = L-phenylalanyl-tRNA(Phe) + AMP + diphosphate + H(+). The chain is Phenylalanine--tRNA ligase beta subunit from Ehrlichia ruminantium (strain Gardel).